The sequence spans 380 residues: MAEFVRAEILGTKFEYTTRYVNLQPIGMGSFGLVCSAFDQITQQLVALKKVMKPFDGSSLAKRTYREIKLLKYLRHENLICLRDIFISPLEDIYIATELLGTDLSRLLSVKPLDSQFAQYFIYQILRGLKYIHSANVIHRDLKPTNILINENCDLKICDFGLARLQEPQMTGYVSTRYYRAPEIMLTWQRYGVQVDIWSAGCILAEMLRGKPLFPGKDHVHQFHLITNILGNPPKSVLEKITSKNTMKFVQSLPSREPRDLSTIVPKDTDFDAIDLLKKMLVIDPDIRVSAQDALRHPYLAPYHDPTDEPVAAGPFDWSFNNMDLPKETWKVMIYSEVLDYLSVDSPDSGSMALGGSSPFDHRALDREFSEFFDDREGPM.

In terms of domain architecture, Protein kinase spans 20 to 300 (YVNLQPIGMG…AQDALRHPYL (281 aa)). ATP-binding positions include 26-34 (IGMGSFGLV) and K49. Residue D141 is the Proton acceptor of the active site. T171 carries the post-translational modification Phosphothreonine. The TXY motif lies at 171–173 (TGY). Y173 carries the post-translational modification Phosphotyrosine.

This sequence belongs to the protein kinase superfamily. Ser/Thr protein kinase family. MAP kinase subfamily. HOG1 sub-subfamily. It depends on Mg(2+) as a cofactor. Dually phosphorylated on Thr-171 and Tyr-173, which activates the enzyme.

It catalyses the reaction L-seryl-[protein] + ATP = O-phospho-L-seryl-[protein] + ADP + H(+). It carries out the reaction L-threonyl-[protein] + ATP = O-phospho-L-threonyl-[protein] + ADP + H(+). Activated by tyrosine and threonine phosphorylation. Its function is as follows. Mitogen-activated protein kinase required for growth on media where sorbitol or mannitol is the sole carbon source. This chain is Mitogen-activated protein kinase mpkC (mpkC), found in Aspergillus clavatus (strain ATCC 1007 / CBS 513.65 / DSM 816 / NCTC 3887 / NRRL 1 / QM 1276 / 107).